The primary structure comprises 330 residues: Src kinase-associated phosphoprotein 2-B (330 aa).

The segment at 57 to 84 (DKAEDDDQEENDGFPLPPDAVSLASDRD) is disordered. Positions 59–68 (AEDDDQEEND) are enriched in acidic residues. The PH domain occupies 105 to 208 (EYLKAGYLEK…WINAIMNSRG (104 aa)). Residues 236-261 (ELPEESEKPVTETETQKATPVPVNNT) form a disordered region. Over residues 240–250 (ESEKPVTETET) the composition is skewed to basic and acidic residues. Residues 251–261 (QKATPVPVNNT) show a composition bias toward polar residues. The 62-residue stretch at 268–329 (DYANFYRGLW…PKAYIIEMYD (62 aa)) folds into the SH3 domain.

Belongs to the SKAP family. Phosphorylated on tyrosines.

It is found in the cytoplasm. Functionally, may be involved in B-cell and macrophage adhesion processes. May play a role in src signaling pathway. This chain is Src kinase-associated phosphoprotein 2-B (skap2-b), found in Xenopus laevis (African clawed frog).